We begin with the raw amino-acid sequence, 76 residues long: Probable insulin-like peptide alpha-type 3 (76 aa).

Residues 1-18 (MFVLLIILSIILAQVTDA) form the signal peptide. 3 disulfide bridges follow: C28-C58, C40-C71, and C46-C72.

This sequence belongs to the insulin family.

It is found in the secreted. This is Probable insulin-like peptide alpha-type 3 (ins-23) from Caenorhabditis elegans.